The sequence spans 219 residues: Ribonuclease HII (219 aa).

The RNase H type-2 domain occupies 22 to 219 (GLVAGVDEVG…LLAMRMEAVV (198 aa)). Residues aspartate 28, glutamate 29, and aspartate 125 each contribute to the a divalent metal cation site.

It belongs to the RNase HII family. Mn(2+) is required as a cofactor. The cofactor is Mg(2+).

The protein resides in the cytoplasm. The enzyme catalyses Endonucleolytic cleavage to 5'-phosphomonoester.. Its function is as follows. Endonuclease that specifically degrades the RNA of RNA-DNA hybrids. The chain is Ribonuclease HII from Granulibacter bethesdensis (strain ATCC BAA-1260 / CGDNIH1).